A 184-amino-acid polypeptide reads, in one-letter code: GTP-binding protein Rheb (184 aa).

Lys8 is covalently cross-linked (Glycyl lysine isopeptide (Lys-Gly) (interchain with G-Cter in ubiquitin)). Positions 16, 17, 18, 19, 20, 21, 32, and 33 each coordinate GDP. GTP-binding residues include Ser16, Val17, Gly18, Lys19, Ser20, Ser21, Val32, Asp33, Tyr35, Pro37, Thr38, Gly63, Asn119, Lys120, and Asp122. Ser20 contacts Mg(2+). The Effector region signature appears at 35–43 (YDPTIENTF). Thr38 serves as a coordination point for Mg(2+). Asn119 provides a ligand contact to GDP. Asp122 provides a ligand contact to GDP. Ser130 is modified (phosphoserine; by MAPKAPK5). Ala150 is a GDP binding site. Position 150 (Ala150) interacts with GTP. Cys181 is subject to Cysteine methyl ester. Residue Cys181 is the site of S-farnesyl cysteine attachment. The propeptide at 182–184 (SVM) is removed in mature form.

Belongs to the small GTPase superfamily. Rheb family. As to quaternary structure, associates with the mTORC1 complex (MTOR, MLST8 and RPTOR) in a guanyl nucleotide-independent manner. Interacts with TSC2. Interacts with MCRS1; the interaction maintains RHEB at the lysosome in its active GTP-bound form and prevents its interaction with the mTORC1 complex inhibitor TSC2, ensuring activation of the mTORC1 complex by RHEB. Interacts (when prenylated) with PDE6D; this promotes release from membranes. Post-translationally, farnesylation is important for efficiently activating mTORC1-mediated signaling. In terms of processing, polyubiquitinated in response to amino acid, promoting its interaction with MTOR and mTORC1 activation. Deubiquitination by ATXN3 promotes recruitment of the TSC-TBC complex and RHEB inactivation by TSC2. Monoubiquitinated at Lys-8 by RNF152, promoting its association with the TSC-TBC complex. Deubiquitinated at Lys-8 by USP4, promoting mTORC1 activation. Phosphorylation by MAPKAPK5 impairs GTP-binding and inactivation.

It is found in the endomembrane system. It localises to the lysosome membrane. Its subcellular location is the golgi apparatus membrane. The protein localises to the endoplasmic reticulum membrane. The protein resides in the cytoplasm. It is found in the cytosol. The enzyme catalyses GTP + H2O = GDP + phosphate + H(+). Its activity is regulated as follows. Alternates between an inactive form bound to GDP and an active form bound to GTP. Inactivated by the TSC-TBC complex via the GTPase activating protein (GAP) domain of TSC2. Autoinhibited by Tyr-35, which constrains the active site conformation, restricting the access of the catalytic Asp-65 to the nucleotide-binding pocket. Functionally, small GTPase that acts as an allosteric activator of the canonical mTORC1 complex, an evolutionarily conserved central nutrient sensor that stimulates anabolic reactions and macromolecule biosynthesis to promote cellular biomass generation and growth. In response to nutrients, growth factors or amino acids, specifically activates the protein kinase activity of MTOR, the catalytic component of the mTORC1 complex: acts by causing a conformational change that allows the alignment of residues in the active site of MTOR, thereby enhancing the phosphorylation of ribosomal protein S6 kinase (RPS6KB1 and RPS6KB2) and EIF4EBP1 (4E-BP1). RHEB is also required for localization of the TSC-TBC complex to lysosomal membranes. In response to starvation, RHEB is inactivated by the TSC-TBC complex, preventing activation of mTORC1. Has low intrinsic GTPase activity. The chain is GTP-binding protein Rheb from Mus musculus (Mouse).